A 154-amino-acid polypeptide reads, in one-letter code: Protein X (154 aa).

The mitochondrial targeting sequence stretch occupies residues 68–117 (PCALRFTSARRMETTVNAPQSLPTPLHKRTLGLSPRSTTWIEEYIKDCVF).

The protein belongs to the orthohepadnavirus protein X family. As to quaternary structure, may form homodimer. May interact with host CEBPA, CFLAR, CREB1, DDB1, E4F1, HBXIP, HSPD1/HSP60, NFKBIA, POLR2E and SMAD4. Interacts with host SMC5-SMC6 complex and induces its degradation. Interacts with host TRPC4AP; leading to prevent ubiquitination of TRPC4AP. Interacts with host PLSCR1; this interaction promotes ubiquitination and degradation of HBx and impairs HBx-mediated cell proliferation. A fraction may be phosphorylated in insect cells and HepG2 cells, a human hepatoblastoma cell line. Phosphorylated in vitro by host protein kinase C or mitogen-activated protein kinase. N-acetylated in insect cells.

Its subcellular location is the host cytoplasm. The protein localises to the host nucleus. It localises to the host mitochondrion. In terms of biological role, multifunctional protein that plays a role in silencing host antiviral defenses and promoting viral transcription. Does not seem to be essential for HBV infection. May be directly involved in development of cirrhosis and liver cancer (hepatocellular carcinoma). Most of cytosolic activities involve modulation of cytosolic calcium. The effect on apoptosis is controversial depending on the cell types in which the studies have been conducted. May induce apoptosis by localizing in mitochondria and causing loss of mitochondrial membrane potential. May also modulate apoptosis by binding host CFLAR, a key regulator of the death-inducing signaling complex (DISC). Promotes viral transcription by using the host E3 ubiquitin ligase DDB1 to target the SMC5-SMC6 complex to proteasomal degradation. This host complex would otherwise bind to viral episomal DNA, and prevents its transcription. Moderately stimulates transcription of many different viral and cellular transcription elements. Promoters and enhancers stimulated by HBx contain DNA binding sites for NF-kappa-B, AP-1, AP-2, c-EBP, ATF/CREB, or the calcium-activated factor NF-AT. This is Protein X from Homo sapiens (Human).